Consider the following 282-residue polypeptide: 3-hydroxyanthranilate 3,4-dioxygenase (282 aa).

Residues 1-160 (MAMAINVKKW…SKQYKSGKPD (160 aa)) form a domain A (catalytic) region. Arginine 43 is an O2 binding site. Residues histidine 47, glutamate 53, and histidine 91 each contribute to the Fe cation site. Glutamate 53 is a binding site for substrate. Residues arginine 95 and glutamate 105 each contribute to the substrate site. Residues 161-177 (PDQPKAKMPFCLSTEQV) are linker. Residues 178–282 (MEPFSFQHWL…LSTSQVPLPM (105 aa)) are domain B.

This sequence belongs to the 3-HAO family. As to quaternary structure, monomer. Requires Fe(2+) as cofactor.

It localises to the cytoplasm. It is found in the cytosol. The enzyme catalyses 3-hydroxyanthranilate + O2 = (2Z,4Z)-2-amino-3-carboxymuconate 6-semialdehyde. It participates in cofactor biosynthesis; NAD(+) biosynthesis; quinolinate from L-kynurenine: step 3/3. Catalyzes the oxidative ring opening of 3-hydroxyanthranilate to 2-amino-3-carboxymuconate semialdehyde, which spontaneously cyclizes to quinolinate. The sequence is that of 3-hydroxyanthranilate 3,4-dioxygenase (haao) from Xenopus laevis (African clawed frog).